The chain runs to 372 residues: 4-hydroxy-3-methylbut-2-en-1-yl diphosphate synthase (flavodoxin) (372 aa).

Residues Cys-270, Cys-273, Cys-305, and Glu-312 each contribute to the [4Fe-4S] cluster site.

The protein belongs to the IspG family. [4Fe-4S] cluster is required as a cofactor.

It carries out the reaction (2E)-4-hydroxy-3-methylbut-2-enyl diphosphate + oxidized [flavodoxin] + H2O + 2 H(+) = 2-C-methyl-D-erythritol 2,4-cyclic diphosphate + reduced [flavodoxin]. It participates in isoprenoid biosynthesis; isopentenyl diphosphate biosynthesis via DXP pathway; isopentenyl diphosphate from 1-deoxy-D-xylulose 5-phosphate: step 5/6. Converts 2C-methyl-D-erythritol 2,4-cyclodiphosphate (ME-2,4cPP) into 1-hydroxy-2-methyl-2-(E)-butenyl 4-diphosphate. This chain is 4-hydroxy-3-methylbut-2-en-1-yl diphosphate synthase (flavodoxin), found in Salmonella arizonae (strain ATCC BAA-731 / CDC346-86 / RSK2980).